A 317-amino-acid polypeptide reads, in one-letter code: Protoheme IX farnesyltransferase (317 aa).

9 helical membrane-spanning segments follow: residues 29 to 49 (LILL…QGRV), 53 to 73 (LLLI…TINC), 102 to 122 (VFLA…FANL), 123 to 143 (LSAC…THWL), 151 to 171 (IVIG…AVTG), 179 to 199 (VLFG…AMLI), 224 to 241 (IFLY…LVYP), 245 to 267 (VSWG…AWQL), and 283 to 303 (FSIL…LLLP).

The protein belongs to the UbiA prenyltransferase family. Protoheme IX farnesyltransferase subfamily.

The protein resides in the cell inner membrane. It carries out the reaction heme b + (2E,6E)-farnesyl diphosphate + H2O = Fe(II)-heme o + diphosphate. The protein operates within porphyrin-containing compound metabolism; heme O biosynthesis; heme O from protoheme: step 1/1. In terms of biological role, converts heme B (protoheme IX) to heme O by substitution of the vinyl group on carbon 2 of heme B porphyrin ring with a hydroxyethyl farnesyl side group. This Thermosynechococcus vestitus (strain NIES-2133 / IAM M-273 / BP-1) protein is Protoheme IX farnesyltransferase.